Reading from the N-terminus, the 587-residue chain is Urease subunit alpha (587 aa).

Residues 134-572 (GGIDTHVHFI…LPLAQRYLYT (439 aa)) form the Urease domain. Ni(2+)-binding residues include His139, His141, and Lys222. Residue Lys222 is modified to N6-carboxylysine. Substrate is bound at residue His224. Residues His251 and His277 each contribute to the Ni(2+) site. The active-site Proton donor is the His325. Residue Asp365 coordinates Ni(2+).

It belongs to the metallo-dependent hydrolases superfamily. Urease alpha subunit family. In terms of assembly, heterotrimer of UreA (gamma), UreB (beta) and UreC (alpha) subunits. Three heterotrimers associate to form the active enzyme. It depends on Ni cation as a cofactor. In terms of processing, carboxylation allows a single lysine to coordinate two nickel ions.

Its subcellular location is the cytoplasm. It catalyses the reaction urea + 2 H2O + H(+) = hydrogencarbonate + 2 NH4(+). It participates in nitrogen metabolism; urea degradation; CO(2) and NH(3) from urea (urease route): step 1/1. In Clostridium perfringens, this protein is Urease subunit alpha.